The sequence spans 36 residues: F420-dependent NADP reductase (36 aa).

NADP(+) is bound at residue 9 to 12 (TGNI).

This sequence belongs to the F420-dependent NADP reductase family. As to quaternary structure, homotetramer.

It catalyses the reaction reduced coenzyme F420-(gamma-L-Glu)(n) + NADP(+) = oxidized coenzyme F420-(gamma-L-Glu)(n) + NADPH + 2 H(+). Functionally, catalyzes the reduction of NADP(+) with F420H(2) via hydride transfer, and the reverse reaction, i.e. the reduction of F420 with NADPH. In M.organophilum, an alcohol-fermenting methanogen containing an NADP-dependent alcohol dehydrogenase, is probably involved in the regeneration of F420H(2) required for CO(2) reduction to methane. Thus, during growth on alcohol and CO(2), the F420-dependent NADP reductase probably has the function of coupling the NADP-dependent oxidation of the alcohol to the aldehyde with the F420-dependent reduction of CO(2) to methane. This chain is F420-dependent NADP reductase (fno), found in Methanogenium organophilum.